Reading from the N-terminus, the 209-residue chain is PRA1 family protein A3 (209 aa).

A run of 4 helical transmembrane segments spans residues leucine 51–threonine 72, alanine 76–phenylalanine 98, leucine 143–leucine 163, and leucine 164–arginine 184.

The protein belongs to the PRA1 family.

It localises to the endosome membrane. Its function is as follows. May be involved in both secretory and endocytic intracellular trafficking in the endosomal/prevacuolar compartments. This is PRA1 family protein A3 (PRA1A3) from Arabidopsis thaliana (Mouse-ear cress).